The primary structure comprises 133 residues: Small ribosomal subunit protein uS11 (133 aa).

Belongs to the universal ribosomal protein uS11 family. Part of the 30S ribosomal subunit. Interacts with proteins S7 and S18. Binds to IF-3.

Located on the platform of the 30S subunit, it bridges several disparate RNA helices of the 16S rRNA. Forms part of the Shine-Dalgarno cleft in the 70S ribosome. This is Small ribosomal subunit protein uS11 from Bordetella petrii (strain ATCC BAA-461 / DSM 12804 / CCUG 43448).